The following is a 279-amino-acid chain: Undecaprenyl-diphosphatase (279 aa).

Helical transmembrane passes span 45 to 65, 85 to 105, 113 to 133, 188 to 208, 226 to 246, and 255 to 275; these read FVEM…IVIY, WQLW…ALPF, FNFM…FIWV, SVAA…YSGL, LILL…IRFL, and FTIF…YWLV.

It belongs to the UppP family.

Its subcellular location is the cell membrane. The catalysed reaction is di-trans,octa-cis-undecaprenyl diphosphate + H2O = di-trans,octa-cis-undecaprenyl phosphate + phosphate + H(+). Catalyzes the dephosphorylation of undecaprenyl diphosphate (UPP). Confers resistance to bacitracin. This Streptococcus agalactiae serotype III (strain NEM316) protein is Undecaprenyl-diphosphatase.